Consider the following 132-residue polypeptide: 3-aminoacrylate deaminase RutC (132 aa).

The protein belongs to the RutC family.

The catalysed reaction is (Z)-3-aminoacrylate + H2O + H(+) = 3-oxopropanoate + NH4(+). Functionally, involved in pyrimidine catabolism. Catalyzes the deamination of 3-aminoacrylate to malonic semialdehyde, a reaction that can also occur spontaneously. RutC may facilitate the reaction and modulate the metabolic fitness, rather than catalyzing essential functions. This chain is 3-aminoacrylate deaminase RutC, found in Cronobacter sakazakii (strain ATCC BAA-894) (Enterobacter sakazakii).